The sequence spans 272 residues: Regulatory factor X-associated protein (272 aa).

Disordered stretches follow at residues 1 to 20 (MEAQGVAEGAGPGAASGVPH), 74 to 142 (LCEG…KTCT), and 175 to 195 (KKKKSDQALNCGGTASTGSAG). The segment covering 79–94 (GDGEEEAGEDEADLLD) has biased composition (acidic residues). Positions 163–178 (KKHRNKMYKDKYKKKK) match the Nuclear localization signal motif. Lys-198 participates in a covalent cross-link: Glycyl lysine isopeptide (Lys-Gly) (interchain with G-Cter in SUMO2). Residues 214–270 (TGSFGDRPARPTLLEQVLNQKRLSLLRSPEVVQFLQKQQQLLNQQVLEQRQQQFPGT) are C-terminal domain.

As to quaternary structure, the RFX heterotetrameric complex consists of 2 molecules of RFX5 and one each of RFXAP and RFX-B/RFXANK; with each subunit representing a separate complementation group. RFX forms cooperative DNA binding complexes with X2BP and CBF/NF-Y. RFX associates with CIITA to form an active transcriptional complex. Phosphorylated. In terms of tissue distribution, ubiquitous.

The protein resides in the nucleus. In terms of biological role, part of the RFX complex that binds to the X-box of MHC II promoters. The polypeptide is Regulatory factor X-associated protein (RFXAP) (Homo sapiens (Human)).